A 123-amino-acid polypeptide reads, in one-letter code: Large ribosomal subunit protein uL29 (123 aa).

This sequence belongs to the universal ribosomal protein uL29 family. As to quaternary structure, component of the large ribosomal subunit.

It localises to the cytoplasm. Functionally, component of the large ribosomal subunit. The ribosome is a large ribonucleoprotein complex responsible for the synthesis of proteins in the cell. In Xenopus tropicalis (Western clawed frog), this protein is Large ribosomal subunit protein uL29 (rpl35).